The primary structure comprises 286 residues: Formamidopyrimidine-DNA glycosylase (286 aa).

Proline 2 acts as the Schiff-base intermediate with DNA in catalysis. Glutamate 3 functions as the Proton donor in the catalytic mechanism. The active-site Proton donor; for beta-elimination activity is the lysine 61. Residues histidine 103, arginine 122, and arginine 164 each coordinate DNA. The FPG-type zinc-finger motif lies at 250–284 (NAYGQTGEPCGRCGTQIVRENFMNRGSHYCPNCQK). Residue arginine 274 is the Proton donor; for delta-elimination activity of the active site.

Belongs to the FPG family. In terms of assembly, monomer. It depends on Zn(2+) as a cofactor.

The enzyme catalyses Hydrolysis of DNA containing ring-opened 7-methylguanine residues, releasing 2,6-diamino-4-hydroxy-5-(N-methyl)formamidopyrimidine.. It carries out the reaction 2'-deoxyribonucleotide-(2'-deoxyribose 5'-phosphate)-2'-deoxyribonucleotide-DNA = a 3'-end 2'-deoxyribonucleotide-(2,3-dehydro-2,3-deoxyribose 5'-phosphate)-DNA + a 5'-end 5'-phospho-2'-deoxyribonucleoside-DNA + H(+). Involved in base excision repair of DNA damaged by oxidation or by mutagenic agents. Acts as a DNA glycosylase that recognizes and removes damaged bases. Has a preference for oxidized purines, such as 7,8-dihydro-8-oxoguanine (8-oxoG). Has AP (apurinic/apyrimidinic) lyase activity and introduces nicks in the DNA strand. Cleaves the DNA backbone by beta-delta elimination to generate a single-strand break at the site of the removed base with both 3'- and 5'-phosphates. The chain is Formamidopyrimidine-DNA glycosylase from Corynebacterium glutamicum (strain R).